Reading from the N-terminus, the 541-residue chain is Chaperonin GroEL (541 aa).

Residues 29-32, 86-90, G413, 476-478, and D492 each bind ATP; these read TLGP, DGTTT, and NAA.

It belongs to the chaperonin (HSP60) family. In terms of assembly, forms a cylinder of 14 subunits composed of two heptameric rings stacked back-to-back. Interacts with the co-chaperonin GroES.

The protein resides in the cytoplasm. The catalysed reaction is ATP + H2O + a folded polypeptide = ADP + phosphate + an unfolded polypeptide.. Functionally, together with its co-chaperonin GroES, plays an essential role in assisting protein folding. The GroEL-GroES system forms a nano-cage that allows encapsulation of the non-native substrate proteins and provides a physical environment optimized to promote and accelerate protein folding. The protein is Chaperonin GroEL of Streptococcus equi subsp. zooepidemicus (strain H70).